A 220-amino-acid polypeptide reads, in one-letter code: Small ribosomal subunit protein eS1 (220 aa).

The protein belongs to the eukaryotic ribosomal protein eS1 family.

This Pyrobaculum arsenaticum (strain DSM 13514 / JCM 11321 / PZ6) protein is Small ribosomal subunit protein eS1.